The sequence spans 394 residues: MAKEKFERVKPHVNVGTIGHVDHGKTTLTAAISSVLTKTYGGTKRDFAQIDNAPEERERGITINTSHIEYDTPARHYAHVDCPGHADYVKNMITGAAQMDGAILVVASTDGPMPQTREHILLSRQVGVPFIIVFMNKCDMVDDEELLELVEMEVRELLSEYDFPGDDLPVIQGSALKALEGEPEWEAKILELAEALDTYIPEPERAIDGAFILPIEDVFSIAGRGTVVTGRVERGIVRVGDEVEIVGIKDTTKSTCTGVEMFRKLLDEGRAGENCGVLLRGIKREDVERGQVLAAPGSITPHTTFKSEIYVLSKEEGGRHTPFFKGYRPQFYFRTTDVTGTIELPEGVEMVMPGDNVAMTVTLIAPIAMDEGLRFAIREGGRTVGAGVVAEIVA.

The tr-type G domain occupies 10 to 204 (KPHVNVGTIG…ALDTYIPEPE (195 aa)). Positions 19-26 (GHVDHGKT) are G1. 19 to 26 (GHVDHGKT) lines the GTP pocket. T26 is a Mg(2+) binding site. A G2 region spans residues 60-64 (GITIN). The tract at residues 81–84 (DCPG) is G3. GTP contacts are provided by residues 81 to 85 (DCPGH) and 136 to 139 (NKCD). The segment at 136–139 (NKCD) is G4. The G5 stretch occupies residues 174-176 (SAL).

Belongs to the TRAFAC class translation factor GTPase superfamily. Classic translation factor GTPase family. EF-Tu/EF-1A subfamily. Monomer.

The protein localises to the cytoplasm. It carries out the reaction GTP + H2O = GDP + phosphate + H(+). Its function is as follows. GTP hydrolase that promotes the GTP-dependent binding of aminoacyl-tRNA to the A-site of ribosomes during protein biosynthesis. This chain is Elongation factor Tu, found in Shewanella halifaxensis (strain HAW-EB4).